Consider the following 262-residue polypeptide: Acyl-[acyl-carrier-protein]--UDP-N-acetylglucosamine O-acyltransferase (262 aa).

The protein belongs to the transferase hexapeptide repeat family. LpxA subfamily. In terms of assembly, homotrimer.

It is found in the cytoplasm. The catalysed reaction is a (3R)-hydroxyacyl-[ACP] + UDP-N-acetyl-alpha-D-glucosamine = a UDP-3-O-[(3R)-3-hydroxyacyl]-N-acetyl-alpha-D-glucosamine + holo-[ACP]. It participates in glycolipid biosynthesis; lipid IV(A) biosynthesis; lipid IV(A) from (3R)-3-hydroxytetradecanoyl-[acyl-carrier-protein] and UDP-N-acetyl-alpha-D-glucosamine: step 1/6. In terms of biological role, involved in the biosynthesis of lipid A, a phosphorylated glycolipid that anchors the lipopolysaccharide to the outer membrane of the cell. The sequence is that of Acyl-[acyl-carrier-protein]--UDP-N-acetylglucosamine O-acyltransferase from Burkholderia mallei (strain NCTC 10247).